The primary structure comprises 408 residues: uncharacterized protein (408 aa).

The helical transmembrane segment at 56–76 (YWAGPAAASMVAAVTPYVAWL) threads the bilayer.

The protein belongs to the mycobacterial PPE family.

Its subcellular location is the cell membrane. This is an uncharacterized protein from Mycobacterium bovis (strain ATCC BAA-935 / AF2122/97).